Consider the following 570-residue polypeptide: Sulfite reductase [NADPH] hemoprotein beta-component (570 aa).

Positions 434, 440, 479, and 483 each coordinate [4Fe-4S] cluster. Residue cysteine 483 coordinates siroheme.

The protein belongs to the nitrite and sulfite reductase 4Fe-4S domain family. As to quaternary structure, alpha(8)-beta(8). The alpha component is a flavoprotein, the beta component is a hemoprotein. It depends on siroheme as a cofactor. The cofactor is [4Fe-4S] cluster.

The catalysed reaction is hydrogen sulfide + 3 NADP(+) + 3 H2O = sulfite + 3 NADPH + 4 H(+). It functions in the pathway sulfur metabolism; hydrogen sulfide biosynthesis; hydrogen sulfide from sulfite (NADPH route): step 1/1. In terms of biological role, component of the sulfite reductase complex that catalyzes the 6-electron reduction of sulfite to sulfide. This is one of several activities required for the biosynthesis of L-cysteine from sulfate. The polypeptide is Sulfite reductase [NADPH] hemoprotein beta-component (Cronobacter sakazakii (strain ATCC BAA-894) (Enterobacter sakazakii)).